A 252-amino-acid chain; its full sequence is Imidazole glycerol phosphate synthase subunit HisF (252 aa).

Active-site residues include D12 and D131.

This sequence belongs to the HisA/HisF family. Heterodimer of HisH and HisF.

Its subcellular location is the cytoplasm. It catalyses the reaction 5-[(5-phospho-1-deoxy-D-ribulos-1-ylimino)methylamino]-1-(5-phospho-beta-D-ribosyl)imidazole-4-carboxamide + L-glutamine = D-erythro-1-(imidazol-4-yl)glycerol 3-phosphate + 5-amino-1-(5-phospho-beta-D-ribosyl)imidazole-4-carboxamide + L-glutamate + H(+). Its pathway is amino-acid biosynthesis; L-histidine biosynthesis; L-histidine from 5-phospho-alpha-D-ribose 1-diphosphate: step 5/9. Its function is as follows. IGPS catalyzes the conversion of PRFAR and glutamine to IGP, AICAR and glutamate. The HisF subunit catalyzes the cyclization activity that produces IGP and AICAR from PRFAR using the ammonia provided by the HisH subunit. The protein is Imidazole glycerol phosphate synthase subunit HisF of Thermus thermophilus (strain ATCC BAA-163 / DSM 7039 / HB27).